The sequence spans 221 residues: NEDD8 ultimate buster 1 (221 aa).

3 consecutive UBA domains span residues 1–19 (LGLRACDGNVDHAAVHIAN), 30–76 (EERE…LLHN), and 95–135 (SPSQ…LVHN). The disordered stretch occupies residues 136–193 (GGRLPPDLQLSAEDSSSTPSTSPSDSAGTSSASTDEDMETEAVNEILEDIPEHEEDYL). Residues 146 to 168 (SAEDSSSTPSTSPSDSAGTSSAS) show a composition bias toward low complexity. Acidic residues predominate over residues 169-193 (TDEDMETEAVNEILEDIPEHEEDYL).

Directly interacts with NEDD8 and PSMD4/S5a, a member of the regulatory subunit of the 26S proteasome. Interacts with AIPL1.

The protein resides in the nucleus. Its function is as follows. Specific down-regulator of the NEDD8 conjugation system. Recruits NEDD8 and its conjugates to the proteasome for degradation. This chain is NEDD8 ultimate buster 1 (NUB1), found in Bos taurus (Bovine).